A 213-amino-acid chain; its full sequence is Large ribosomal subunit protein uL3 (213 aa).

This sequence belongs to the universal ribosomal protein uL3 family. In terms of assembly, part of the 50S ribosomal subunit. Forms a cluster with proteins L14 and L19.

In terms of biological role, one of the primary rRNA binding proteins, it binds directly near the 3'-end of the 23S rRNA, where it nucleates assembly of the 50S subunit. In Bifidobacterium longum subsp. infantis (strain ATCC 15697 / DSM 20088 / JCM 1222 / NCTC 11817 / S12), this protein is Large ribosomal subunit protein uL3.